The sequence spans 202 residues: Outer-membrane lipoprotein carrier protein (202 aa).

A signal peptide spans 1-18; it reads MNKLFLILLLIFSHEVFS.

The protein belongs to the LolA family. Monomer.

Its subcellular location is the periplasm. Functionally, participates in the translocation of lipoproteins from the inner membrane to the outer membrane. Only forms a complex with a lipoprotein if the residue after the N-terminal Cys is not an aspartate (The Asp acts as a targeting signal to indicate that the lipoprotein should stay in the inner membrane). The sequence is that of Outer-membrane lipoprotein carrier protein from Legionella pneumophila (strain Corby).